A 1553-amino-acid polypeptide reads, in one-letter code: Probable serine/threonine-protein kinase qkgA (1553 aa).

The segment at 113–142 (SSSSSSSSTSSSPSLTSSPSSPISTSPPYH) is disordered. LRR repeat units lie at residues 287 to 309 (NGTF…INMC), 311 to 333 (QLVE…TELK), 334 to 356 (FLKN…CNLT), and 357 to 378 (LLKV…IVEL). The 225-residue stretch at 395–619 (SCETWNKVKL…KRLIHESEKS (225 aa)) folds into the Roc domain. Disordered stretches follow at residues 643-696 (NQGR…QQQQ), 955-1019 (ISNS…PSSQ), and 1048-1090 (NQNG…NNNK). Low complexity-rich tracts occupy residues 648–675 (SISN…TSKK), 683–696 (SQQQ…QQQQ), 956–1018 (SNST…SPSS), and 1059–1090 (TTTT…NNNK). In terms of domain architecture, COR spans 694–893 (QQQLQQSIKE…KTYWKDGVLL (200 aa)). Positions 1242 to 1546 (ILYERQIGEG…QTSYFDSPFL (305 aa)) constitute a Protein kinase domain. Residues 1248–1256 (IGEGGFGLI) and Lys-1271 each bind ATP. The active-site Proton acceptor is the Asp-1393.

Belongs to the protein kinase superfamily. TKL Ser/Thr protein kinase family. ROCO subfamily.

It catalyses the reaction L-seryl-[protein] + ATP = O-phospho-L-seryl-[protein] + ADP + H(+). The enzyme catalyses L-threonyl-[protein] + ATP = O-phospho-L-threonyl-[protein] + ADP + H(+). In terms of biological role, involved in growth, and during development, in aggregation. This Dictyostelium discoideum (Social amoeba) protein is Probable serine/threonine-protein kinase qkgA (qkgA-1).